Consider the following 221-residue polypeptide: Thiopurine S-methyltransferase (221 aa).

Trp12, Leu47, Glu68, and Arg125 together coordinate S-adenosyl-L-methionine.

The protein belongs to the class I-like SAM-binding methyltransferase superfamily. TPMT family.

The protein localises to the cytoplasm. It catalyses the reaction S-adenosyl-L-methionine + a thiopurine = S-adenosyl-L-homocysteine + a thiopurine S-methylether.. This Legionella pneumophila (strain Corby) protein is Thiopurine S-methyltransferase.